Reading from the N-terminus, the 225-residue chain is Uracil-DNA glycosylase (225 aa).

The active-site Proton acceptor is the Asp68.

It belongs to the uracil-DNA glycosylase (UDG) superfamily. UNG family.

The protein localises to the cytoplasm. It catalyses the reaction Hydrolyzes single-stranded DNA or mismatched double-stranded DNA and polynucleotides, releasing free uracil.. In terms of biological role, excises uracil residues from the DNA which can arise as a result of misincorporation of dUMP residues by DNA polymerase or due to deamination of cytosine. This chain is Uracil-DNA glycosylase, found in Parafrankia sp. (strain EAN1pec).